A 445-amino-acid chain; its full sequence is FAS-associated factor 2-B (445 aa).

The UBA domain occupies 12 to 48; the sequence is DQTEKLLQFQDLTGIESIDQCRQTLQQHNWNIETAVQ. Positions 275 to 353 form a coiled coil; sequence SERLEREERN…ERKSECLPAE (79 aa). Residues 302 to 355 form a disordered region; that stretch reads RADQEKERKKKEKQDQKRREEEEAQRKQMLEERKKRNLEEEKERKSECLPAEPV. Positions 303-348 are enriched in basic and acidic residues; it reads ADQEKERKKKEKQDQKRREEEEAQRKQMLEERKKRNLEEEKERKSE. A UBX domain is found at 357-439; the sequence is DHPDNVKIIF…GLSQSQLLFV (83 aa).

The protein localises to the cytoplasm. It localises to the lipid droplet. Its subcellular location is the endoplasmic reticulum. Its function is as follows. Plays an important role in endoplasmic reticulum-associated degradation (ERAD) that mediates ubiquitin-dependent degradation of misfolded endoplasmic reticulum proteins. Involved in inhibition of lipid droplet degradation. Involved in stress granule disassembly. This Xenopus laevis (African clawed frog) protein is FAS-associated factor 2-B (faf2-b).